Here is a 257-residue protein sequence, read N- to C-terminus: Reticulon-like protein B4 (257 aa).

The interval 19–42 (IHGHGDSSSLSDSDDDKKSTSSSS) is disordered. Residues 68–257 (PADIFLWRNK…PRGALNKKKD (190 aa)) form the Reticulon domain. Helical transmembrane passes span 78 to 98 (KVSG…ELFE), 99 to 119 (YHLL…LFLW), and 173 to 193 (FILV…YNFL).

Interacts with VirB2.

It localises to the endoplasmic reticulum membrane. Plays a role in the Agrobacterium-mediated plant transformation via its interaction with VirB2, the major component of the T-pilus. The chain is Reticulon-like protein B4 (RTNLB4) from Arabidopsis thaliana (Mouse-ear cress).